Here is a 228-residue protein sequence, read N- to C-terminus: 2-C-methyl-D-erythritol 4-phosphate cytidylyltransferase (228 aa).

This sequence belongs to the IspD/TarI cytidylyltransferase family. IspD subfamily.

The enzyme catalyses 2-C-methyl-D-erythritol 4-phosphate + CTP + H(+) = 4-CDP-2-C-methyl-D-erythritol + diphosphate. The protein operates within isoprenoid biosynthesis; isopentenyl diphosphate biosynthesis via DXP pathway; isopentenyl diphosphate from 1-deoxy-D-xylulose 5-phosphate: step 2/6. Functionally, catalyzes the formation of 4-diphosphocytidyl-2-C-methyl-D-erythritol from CTP and 2-C-methyl-D-erythritol 4-phosphate (MEP). This is 2-C-methyl-D-erythritol 4-phosphate cytidylyltransferase from Trichormus variabilis (strain ATCC 29413 / PCC 7937) (Anabaena variabilis).